A 588-amino-acid polypeptide reads, in one-letter code: Glutamate--tRNA ligase (588 aa).

Residues 112-122 (PNPDFYLHLGS) carry the 'HIGH' region motif.

This sequence belongs to the class-I aminoacyl-tRNA synthetase family. Glutamate--tRNA ligase type 2 subfamily.

Its subcellular location is the cytoplasm. The enzyme catalyses tRNA(Glu) + L-glutamate + ATP = L-glutamyl-tRNA(Glu) + AMP + diphosphate. In terms of biological role, catalyzes the attachment of glutamate to tRNA(Glu) in a two-step reaction: glutamate is first activated by ATP to form Glu-AMP and then transferred to the acceptor end of tRNA(Glu). The protein is Glutamate--tRNA ligase of Caldivirga maquilingensis (strain ATCC 700844 / DSM 13496 / JCM 10307 / IC-167).